A 207-amino-acid polypeptide reads, in one-letter code: N-(5'-phosphoribosyl)anthranilate isomerase (207 aa).

This sequence belongs to the TrpF family.

It catalyses the reaction N-(5-phospho-beta-D-ribosyl)anthranilate = 1-(2-carboxyphenylamino)-1-deoxy-D-ribulose 5-phosphate. The protein operates within amino-acid biosynthesis; L-tryptophan biosynthesis; L-tryptophan from chorismate: step 3/5. This Legionella pneumophila (strain Paris) protein is N-(5'-phosphoribosyl)anthranilate isomerase.